Consider the following 411-residue polypeptide: MREHFNDGVEFARFLAHRFVTDKAPNSAAALTYTTLFAVVPMMTVMFSMLSLIPAFHGMGESIQTFIFRNFVPSAGEAVETYLKSFTTQARHLTWVGVVFLAVTAFTMLVTIEKAFNEIWRVRQPRRGVGRFLLYWAILSLGPLLLGAGFAVTTYITSLSLLHGPDALPGAETLLGLMPLAFSVAAFTLLYSAVPNARVPVRHALMGGVFTAVLFEAAKTLFGLYVSLFPGYQLIYGAFATVPIFLLWIYLSWMIVLFGAVLVCNLSSSRLWRRRSLPKLIVLLGVLRVFLQRQQLGQSLRLTHLHRAGWLLPEDEWEELLDFLEKEQFVCRAGGGEWVLCRDLGAYSLHRLLNRCPWPMPSRERMPASLDEAWYPPFQQAMERLQVEQEALFGESLAHWLADGTSGAKVT.

A run of 6 helical transmembrane segments spans residues L36–F56, H92–I112, F132–V152, L174–V194, G207–F229, and I244–C264.

This sequence belongs to the UPF0761 family.

The protein resides in the cell inner membrane. In Pseudomonas aeruginosa (strain ATCC 15692 / DSM 22644 / CIP 104116 / JCM 14847 / LMG 12228 / 1C / PRS 101 / PAO1), this protein is UPF0761 membrane protein PA0951.